The primary structure comprises 208 residues: Small ribosomal subunit protein uS4 (208 aa).

Positions 98 to 159 (LRLDNVAYRL…AARTHIRIAA (62 aa)) constitute an S4 RNA-binding domain.

The protein belongs to the universal ribosomal protein uS4 family. As to quaternary structure, part of the 30S ribosomal subunit. Contacts protein S5. The interaction surface between S4 and S5 is involved in control of translational fidelity.

Functionally, one of the primary rRNA binding proteins, it binds directly to 16S rRNA where it nucleates assembly of the body of the 30S subunit. With S5 and S12 plays an important role in translational accuracy. The chain is Small ribosomal subunit protein uS4 from Acidithiobacillus ferrooxidans (strain ATCC 23270 / DSM 14882 / CIP 104768 / NCIMB 8455) (Ferrobacillus ferrooxidans (strain ATCC 23270)).